Consider the following 258-residue polypeptide: Tryptophan synthase alpha chain (258 aa).

Active-site proton acceptor residues include Glu-47 and Asp-58.

This sequence belongs to the TrpA family. In terms of assembly, tetramer of two alpha and two beta chains.

It catalyses the reaction (1S,2R)-1-C-(indol-3-yl)glycerol 3-phosphate + L-serine = D-glyceraldehyde 3-phosphate + L-tryptophan + H2O. It participates in amino-acid biosynthesis; L-tryptophan biosynthesis; L-tryptophan from chorismate: step 5/5. Functionally, the alpha subunit is responsible for the aldol cleavage of indoleglycerol phosphate to indole and glyceraldehyde 3-phosphate. The polypeptide is Tryptophan synthase alpha chain (Bacillus anthracis (strain CDC 684 / NRRL 3495)).